Reading from the N-terminus, the 202-residue chain is MMIVIMLILSYLIGAFPSGYVIGKLFFKKDIRQFGSGNTGATNSFRVLGKPAGFLVTFLDIFKGFIVVFFPLWLPVQAEGPITTFFTNGLIVGAFAILGHVYPVYLGFKGGKAVATSAGVILGVNPVLLLILAAIFFGILYLTKYVSLSSIIASICCVIGALLIRDYILFIVSIGVGVLLIIRHRTNIVRIFKGEEPKIKWM.

6 helical membrane passes run 2–22 (MIVI…GYVI), 54–74 (FLVT…PLWL), 88–108 (NGLI…YLGF), 120–140 (VILG…FGIL), 141–161 (YLTK…VIGA), and 162–182 (LLIR…LLII).

This sequence belongs to the PlsY family. In terms of assembly, probably interacts with PlsX.

Its subcellular location is the cell membrane. It carries out the reaction an acyl phosphate + sn-glycerol 3-phosphate = a 1-acyl-sn-glycero-3-phosphate + phosphate. Its pathway is lipid metabolism; phospholipid metabolism. Its function is as follows. Catalyzes the transfer of an acyl group from acyl-phosphate (acyl-PO(4)) to glycerol-3-phosphate (G3P) to form lysophosphatidic acid (LPA). This enzyme utilizes acyl-phosphate as fatty acyl donor, but not acyl-CoA or acyl-ACP. The sequence is that of Glycerol-3-phosphate acyltransferase from Staphylococcus saprophyticus subsp. saprophyticus (strain ATCC 15305 / DSM 20229 / NCIMB 8711 / NCTC 7292 / S-41).